The sequence spans 570 residues: Zinc finger and BTB domain-containing protein 44 (570 aa).

Lys-4 participates in a covalent cross-link: Glycyl lysine isopeptide (Lys-Gly) (interchain with G-Cter in SUMO2). The 68-residue stretch at 31 to 98 (CDITIRVQDK…AYTATLSINT (68 aa)) folds into the BTB domain. Residues Ser-135, Ser-159, Ser-161, Ser-165, Ser-191, and Ser-194 each carry the phosphoserine modification. Disordered regions lie at residues 194–220 (SPVK…NRNQ) and 243–267 (EKVK…RRMA). Residues 199–220 (GTQTSSPQVLNSSASYSENRNQ) show a composition bias toward polar residues. Thr-200 bears the Phosphothreonine mark. A Glycyl lysine isopeptide (Lys-Gly) (interchain with G-Cter in SUMO2) cross-link involves residue Lys-290. Residues 295-369 (SDEEVHEEVS…NAPPDDDDRL (75 aa)) form a disordered region. A compositionally biased stretch (low complexity) spans 304-318 (SQPVSASQSSLSDQQ). Polar residues predominate over residues 352–361 (TLQSTSSTNA). 4 consecutive C2H2-type zinc fingers follow at residues 399 to 421 (FQCP…MLIH), 427 to 449 (FQCD…RLKH), 455 to 479 (FRCQ…VSRH), and 487 to 511 (YECK…SLNH).

It is found in the nucleus. In terms of biological role, may be involved in transcriptional regulation. The sequence is that of Zinc finger and BTB domain-containing protein 44 (ZBTB44) from Homo sapiens (Human).